The chain runs to 312 residues: Glyoxylate/hydroxypyruvate reductase A (312 aa).

Arginine 227 is an active-site residue. Catalysis depends on histidine 275, which acts as the Proton donor.

It belongs to the D-isomer specific 2-hydroxyacid dehydrogenase family. GhrA subfamily.

The protein resides in the cytoplasm. The enzyme catalyses glycolate + NADP(+) = glyoxylate + NADPH + H(+). It carries out the reaction (R)-glycerate + NAD(+) = 3-hydroxypyruvate + NADH + H(+). The catalysed reaction is (R)-glycerate + NADP(+) = 3-hydroxypyruvate + NADPH + H(+). Catalyzes the NADPH-dependent reduction of glyoxylate and hydroxypyruvate into glycolate and glycerate, respectively. This Escherichia coli O17:K52:H18 (strain UMN026 / ExPEC) protein is Glyoxylate/hydroxypyruvate reductase A.